The chain runs to 508 residues: POTE ankyrin domain family member G (508 aa).

5 ANK repeats span residues 172-201 (QKRT…QLNI), 205-234 (KKRT…DPNI), 238-267 (YGNT…DIES), 271-300 (HGLT…NLNA), and 304-333 (YGRT…DVSS). Over residues 367-376 (KVSSENSNPE) the composition is skewed to polar residues. The disordered stretch occupies residues 367-488 (KVSSENSNPE…QLSEEQNTGI (122 aa)). Basic and acidic residues-rich tracts occupy residues 377-392 (QDLK…RLKG) and 406-421 (EINK…EMKK). Polar residues predominate over residues 476–488 (TQKQLSEEQNTGI).

It belongs to the POTE family.

This is POTE ankyrin domain family member G (POTEG) from Homo sapiens (Human).